Consider the following 379-residue polypeptide: Glutamate 5-kinase (379 aa).

Lys15 contributes to the ATP binding site. Positions 56, 143, and 155 each coordinate substrate. 175–176 (SD) contributes to the ATP binding site. One can recognise a PUA domain in the interval 281–358 (RGTLAIDAGA…SDAAQLLGVR (78 aa)).

The protein belongs to the glutamate 5-kinase family.

Its subcellular location is the cytoplasm. It catalyses the reaction L-glutamate + ATP = L-glutamyl 5-phosphate + ADP. The protein operates within amino-acid biosynthesis; L-proline biosynthesis; L-glutamate 5-semialdehyde from L-glutamate: step 1/2. Functionally, catalyzes the transfer of a phosphate group to glutamate to form L-glutamate 5-phosphate. The polypeptide is Glutamate 5-kinase (Nitrobacter winogradskyi (strain ATCC 25391 / DSM 10237 / CIP 104748 / NCIMB 11846 / Nb-255)).